A 445-amino-acid chain; its full sequence is Inward rectifier potassium channel 4 (445 aa).

Residues 1–55 are Cytoplasmic-facing; sequence MHGHSRNGQAHVPRRKRRNRFVKKNGQCNVYFANLSNKSQRYMADIFTTCVDTRW. A helical membrane pass occupies residues 56-80; the sequence is RYMLMIFSAAFLVSWLFFGLLFWCI. Over 81 to 120 the chain is Extracellular; sequence AFFHGDLEASPGVPAAGGPAAGGGGAAPVAPKPCIMHVNG. The interval 91-111 is val/Gly/Ala/Pro stretch; it reads PGVPAAGGPAAGGGGAAPVAP. Positions 121–132 form an intramembrane region, helical; Pore-forming; it reads FLGAFLFSVETQ. The pore-forming intramembrane region spans 133–139; the sequence is TTIGYGF. The short motif at 134-139 is the Selectivity filter element; the sequence is TIGYGF. At 140-148 the chain is on the extracellular side; it reads RCVTEECPL. Residues 149 to 170 form a helical membrane-spanning segment; that stretch reads AVIAVVVQSIVGCVIDSFMIGT. Over 171–445 the chain is Cytoplasmic; it reads IMAKMARPKK…NISYRRESAI (275 aa). Residues 443-445 carry the PDZ-binding motif; sequence SAI.

The protein belongs to the inward rectifier-type potassium channel (TC 1.A.2.1) family. KCNJ4 subfamily. In terms of assembly, homomultimeric and heteromultimeric association with KCNJ2 and KCNJ12. Interacts with DLG2 and DLG4. Associates, via its PDZ-recognition domain, with a complex containing LIN7A, LIN7B, LIN7C, DLG1, CASK and APBA1. Interacts with TAX1BP3. TAX1BP3 competes with LIN7 family members for KCNJ4 binding. Heart, skeletal muscle, and several different brain regions including the hippocampus.

It localises to the cell membrane. It is found in the postsynaptic cell membrane. The protein localises to the cytoplasmic vesicle membrane. The enzyme catalyses K(+)(in) = K(+)(out). In terms of biological role, inward rectifier potassium channels are characterized by a greater tendency to allow potassium to flow into the cell rather than out of it. Their voltage dependence is regulated by the concentration of extracellular potassium; as external potassium is raised, the voltage range of the channel opening shifts to more positive voltages. The inward rectification is mainly due to the blockage of outward current by internal magnesium. Can be blocked by extracellular barium and cesium. The polypeptide is Inward rectifier potassium channel 4 (KCNJ4) (Homo sapiens (Human)).